A 227-amino-acid chain; its full sequence is Translation initiation factor 6 (227 aa).

It belongs to the eIF-6 family.

Binds to the 50S ribosomal subunit and prevents its association with the 30S ribosomal subunit to form the 70S initiation complex. This Pyrococcus furiosus (strain ATCC 43587 / DSM 3638 / JCM 8422 / Vc1) protein is Translation initiation factor 6.